Reading from the N-terminus, the 236-residue chain is Carboxymethylenebutenolidase (236 aa).

Catalysis depends on residues Cys123, Asp171, and His202.

It belongs to the dienelactone hydrolase family. As to quaternary structure, monomer.

The catalysed reaction is 2-(5-oxo-2,5-dihydrofuran-2-ylidene)acetate + H2O = 4-oxohex-2-enedioate + H(+). Its pathway is aromatic compound metabolism; 3-chlorocatechol degradation. Ring cleavage of cyclic ester dienelactone to produce maleylacetate. The chain is Carboxymethylenebutenolidase (clcD) from Pseudomonas knackmussii (strain DSM 6978 / CCUG 54928 / LMG 23759 / B13).